We begin with the raw amino-acid sequence, 631 residues long: Phosphomethylpyrimidine synthase (631 aa).

Residues Asn239, Met268, Tyr297, His333, 353–355 (SRG), 394–397 (DGLR), and Glu433 each bind substrate. His437 contributes to the Zn(2+) binding site. Tyr460 provides a ligand contact to substrate. His501 contacts Zn(2+). [4Fe-4S] cluster contacts are provided by Cys581, Cys584, and Cys589.

It belongs to the ThiC family. In terms of assembly, homodimer. [4Fe-4S] cluster serves as cofactor.

The enzyme catalyses 5-amino-1-(5-phospho-beta-D-ribosyl)imidazole + S-adenosyl-L-methionine = 4-amino-2-methyl-5-(phosphooxymethyl)pyrimidine + CO + 5'-deoxyadenosine + formate + L-methionine + 3 H(+). Its pathway is cofactor biosynthesis; thiamine diphosphate biosynthesis. Its function is as follows. Catalyzes the synthesis of the hydroxymethylpyrimidine phosphate (HMP-P) moiety of thiamine from aminoimidazole ribotide (AIR) in a radical S-adenosyl-L-methionine (SAM)-dependent reaction. The chain is Phosphomethylpyrimidine synthase from Escherichia coli O8 (strain IAI1).